The primary structure comprises 237 residues: Ubiquitin-conjugating enzyme E2 34 (237 aa).

The UBC core domain maps to 5-162 (ACIKRLQKEY…FPEYVEKYNQ (158 aa)). The active-site Glycyl thioester intermediate is Cys-87. The segment at 168–207 (QATTQLTTPESPQKSDTKVESEKTIDPTKGDSEGGLKERK) is disordered. Residues 180–204 (QKSDTKVESEKTIDPTKGDSEGGLK) show a composition bias toward basic and acidic residues. The helical transmembrane segment at 214 to 234 (LPAWIILLLVSVFGVVMALPL) threads the bilayer.

Belongs to the ubiquitin-conjugating enzyme family.

The protein resides in the membrane. It catalyses the reaction S-ubiquitinyl-[E1 ubiquitin-activating enzyme]-L-cysteine + [E2 ubiquitin-conjugating enzyme]-L-cysteine = [E1 ubiquitin-activating enzyme]-L-cysteine + S-ubiquitinyl-[E2 ubiquitin-conjugating enzyme]-L-cysteine.. It participates in protein modification; protein ubiquitination. Its function is as follows. Accepts the ubiquitin from the E1 complex and catalyzes its covalent attachment to other proteins. This is Ubiquitin-conjugating enzyme E2 34 (UBC34) from Arabidopsis thaliana (Mouse-ear cress).